We begin with the raw amino-acid sequence, 380 residues long: Cytochrome b (380 aa).

The next 4 helical transmembrane spans lie at 34 to 54 (FGSL…LLAM), 78 to 99 (WLIR…YLHI), 114 to 134 (WNTG…GYVL), and 179 to 199 (FFAL…IHLT). Heme b-binding residues include His84 and His98. Heme b-binding residues include His183 and His197. An a ubiquinone-binding site is contributed by His202. A run of 4 helical transmembrane segments spans residues 227 to 247 (LKDI…ALFS), 289 to 309 (LGGV…PFLH), 321 to 341 (LSQL…WVGS), and 348 to 368 (FIII…ILFP).

It belongs to the cytochrome b family. In terms of assembly, the cytochrome bc1 complex contains 11 subunits: 3 respiratory subunits (MT-CYB, CYC1 and UQCRFS1), 2 core proteins (UQCRC1 and UQCRC2) and 6 low-molecular weight proteins (UQCRH/QCR6, UQCRB/QCR7, UQCRQ/QCR8, UQCR10/QCR9, UQCR11/QCR10 and a cleavage product of UQCRFS1). This cytochrome bc1 complex then forms a dimer. Requires heme b as cofactor.

The protein localises to the mitochondrion inner membrane. Component of the ubiquinol-cytochrome c reductase complex (complex III or cytochrome b-c1 complex) that is part of the mitochondrial respiratory chain. The b-c1 complex mediates electron transfer from ubiquinol to cytochrome c. Contributes to the generation of a proton gradient across the mitochondrial membrane that is then used for ATP synthesis. In Calonectris leucomelas (Streaked shearwater), this protein is Cytochrome b (MT-CYB).